The following is a 154-amino-acid chain: Large ribosomal subunit protein bL9c (154 aa).

This sequence belongs to the bacterial ribosomal protein bL9 family.

The protein resides in the plastid. It localises to the chloroplast. Functionally, binds to the 23S rRNA. The polypeptide is Large ribosomal subunit protein bL9c (Gracilaria tenuistipitata var. liui (Red alga)).